The following is a 924-amino-acid chain: Periplasmic nitrate reductase (924 aa).

Positions 1–29 (MNRRDFIKNTAIASACGVAGLSVPSSVLA) form a signal peptide, tat-type signal. The region spanning 35–91 (WRWDKAVCRFCGTGCGILVARQDGKIVAVKGDPAAPVNRGLNCIKGYFNAKIMYGED) is the 4Fe-4S Mo/W bis-MGD-type domain. 4 residues coordinate [4Fe-4S] cluster: cysteine 42, cysteine 45, cysteine 49, and cysteine 77. Residues lysine 79, glutamine 147, asparagine 172, cysteine 176, 209–216 (WGANMAEM), methionine 417, glutamine 421, asparagine 527, 552–553 (SD), lysine 575, aspartate 602, and 814–823 (TGRVLEHWHS) each bind Mo-bis(molybdopterin guanine dinucleotide). Tryptophan 890 is a binding site for substrate. The Mo-bis(molybdopterin guanine dinucleotide) site is built by asparagine 898 and lysine 915.

The protein belongs to the prokaryotic molybdopterin-containing oxidoreductase family. NasA/NapA/NarB subfamily. In terms of assembly, component of the periplasmic nitrate reductase NapAB complex composed of NapA and NapB. The cofactor is [4Fe-4S] cluster. It depends on Mo-bis(molybdopterin guanine dinucleotide) as a cofactor. Predicted to be exported by the Tat system. The position of the signal peptide cleavage has not been experimentally proven.

The protein localises to the periplasm. The enzyme catalyses 2 Fe(II)-[cytochrome] + nitrate + 2 H(+) = 2 Fe(III)-[cytochrome] + nitrite + H2O. Functionally, catalytic subunit of the periplasmic nitrate reductase complex NapAB. Receives electrons from NapB and catalyzes the reduction of nitrate to nitrite. The chain is Periplasmic nitrate reductase from Campylobacter lari (strain RM2100 / D67 / ATCC BAA-1060).